Here is a 357-residue protein sequence, read N- to C-terminus: Type II methyltransferase M1.HgaI (357 aa).

Residues 5–357 (IMGLSLFSSA…NITREIFNEN (353 aa)) enclose the SAM-dependent MTase C5-type domain. Cys-83 is a catalytic residue.

The protein belongs to the class I-like SAM-binding methyltransferase superfamily. C5-methyltransferase family.

The catalysed reaction is a 2'-deoxycytidine in DNA + S-adenosyl-L-methionine = a 5-methyl-2'-deoxycytidine in DNA + S-adenosyl-L-homocysteine + H(+). Its function is as follows. A methylase that recognizes DNA with the sequence 5'-GCGTC-3', methylates C-2, and protects the DNA from cleavage by the HgaI endonuclease. The protein is Type II methyltransferase M1.HgaI (hgaIAM) of Avibacterium volantium (Pasteurella volantium).